The sequence spans 496 residues: Cytochrome P450 71D18 (496 aa).

Residues glutamate 2 to isoleucine 22 form a helical; Signal-anchor for type II membrane protein membrane-spanning segment. Cysteine 436 contributes to the heme binding site.

Belongs to the cytochrome P450 family. The cofactor is heme.

The protein localises to the endoplasmic reticulum membrane. The catalysed reaction is (4S)-limonene + reduced [NADPH--hemoprotein reductase] + O2 = (1S,5R)-carveol + oxidized [NADPH--hemoprotein reductase] + H2O + H(+). In terms of biological role, hydroxylates (-)-(4S)-limonene to (-)-trans-carveol, a precursor of (-)-carvone. Fluorinated substrate analogs are hydroxylated with the same regio- and stereochemistry. This chain is Cytochrome P450 71D18 (CYP71D18), found in Mentha gracilis (Gingermint).